Consider the following 294-residue polypeptide: Protease HtpX (294 aa).

The next 2 membrane-spanning stretches (helical) occupy residues 4–24 (ILLF…ILFI) and 33–53 (FGLI…SLLL). Position 139 (histidine 139) interacts with Zn(2+). Residue glutamate 140 is part of the active site. Position 143 (histidine 143) interacts with Zn(2+). Transmembrane regions (helical) follow at residues 147-167 (GDMI…IFLS) and 197-217 (FFIS…ITFW). Glutamate 223 contacts Zn(2+).

It belongs to the peptidase M48B family. Zn(2+) serves as cofactor.

Its subcellular location is the cell membrane. In Wigglesworthia glossinidia brevipalpis, this protein is Protease HtpX.